We begin with the raw amino-acid sequence, 90 residues long: MAHMVKCVKLGREAEGLEEPPFDSELGQKIYNNVSAEAWRGWTEHQKMLLNEYRLQPWKKEHQEFLVQQMEAYFFGEGSEAPKEFVPPSH.

This sequence belongs to the Fe(2+)-trafficking protein family.

Could be a mediator in iron transactions between iron acquisition and iron-requiring processes, such as synthesis and/or repair of Fe-S clusters in biosynthetic enzymes. The sequence is that of Probable Fe(2+)-trafficking protein from Koribacter versatilis (strain Ellin345).